Here is a 138-residue protein sequence, read N- to C-terminus: Small ribosomal subunit protein uS11c (138 aa).

The segment at 1 to 23 (MAKPIPRIGSRRNGRIGSRKSAR) is disordered. Over residues 9–23 (GSRRNGRIGSRKSAR) the composition is skewed to basic residues.

It belongs to the universal ribosomal protein uS11 family. As to quaternary structure, part of the 30S ribosomal subunit.

It localises to the plastid. It is found in the chloroplast. This is Small ribosomal subunit protein uS11c from Vitis vinifera (Grape).